We begin with the raw amino-acid sequence, 503 residues long: Aromatase (503 aa).

A run of 2 helical transmembrane segments spans residues 19 to 39 (EAMPAATMPVLLLTGLFLLVW) and 303 to 323 (MLIAAPDTMSVSLFFMLFLIA). Positions 309 and 374 each coordinate substrate. Residue Cys437 coordinates heme.

Belongs to the cytochrome P450 family. Heme is required as a cofactor. Phosphorylated in vitro by PKA and PKG/PRKG1. These phosphorylations inhibit the catalytic activity as measured by estrone synthesis from androstenedione (36% decrease for PKA and 30% for PKG/PRKG1). Widely expressed, including in adult and fetal brain, placenta, skin fibroblasts, adipose tissue and gonads.

It localises to the endoplasmic reticulum membrane. It is found in the microsome membrane. It catalyses the reaction testosterone + 3 reduced [NADPH--hemoprotein reductase] + 3 O2 = 17beta-estradiol + formate + 3 oxidized [NADPH--hemoprotein reductase] + 4 H2O + 4 H(+). The enzyme catalyses androst-4-ene-3,17-dione + 3 reduced [NADPH--hemoprotein reductase] + 3 O2 = estrone + formate + 3 oxidized [NADPH--hemoprotein reductase] + 4 H2O + 4 H(+). The catalysed reaction is androst-4-ene-3,17-dione + reduced [NADPH--hemoprotein reductase] + O2 = 19-hydroxyandrost-4-ene-3,17-dione + oxidized [NADPH--hemoprotein reductase] + H2O + H(+). It carries out the reaction 19-hydroxyandrost-4-ene-3,17-dione + reduced [NADPH--hemoprotein reductase] + O2 = 19-oxo-androst-4-ene-3,17-dione + oxidized [NADPH--hemoprotein reductase] + 2 H2O + H(+). It catalyses the reaction 19-oxo-androst-4-ene-3,17-dione + reduced [NADPH--hemoprotein reductase] + O2 = estrone + formate + oxidized [NADPH--hemoprotein reductase] + H2O + 2 H(+). The enzyme catalyses estrone + reduced [NADPH--hemoprotein reductase] + O2 = 2-hydroxyestrone + oxidized [NADPH--hemoprotein reductase] + H2O + H(+). The catalysed reaction is 17beta-hydroxy-5alpha-androstan-3-one + reduced [NADPH--hemoprotein reductase] + O2 = 17beta,19-dihydroxy-3-oxo-5alpha-androstanone + oxidized [NADPH--hemoprotein reductase] + H2O + H(+). It carries out the reaction 17beta,19-dihydroxy-3-oxo-5alpha-androstanone + reduced [NADPH--hemoprotein reductase] + O2 = 17beta-hydroxy-3,19-dioxo-5alpha-androstanone + oxidized [NADPH--hemoprotein reductase] + 2 H2O + H(+). It catalyses the reaction 17beta-hydroxy-3,19-dioxo-5alpha-androstanone + reduced [NADPH--hemoprotein reductase] + O2 = 17beta-hydroxy-3-oxo-19-nor-5alpha-androst-1-ene + formate + oxidized [NADPH--hemoprotein reductase] + H2O + 2 H(+). It functions in the pathway steroid hormone biosynthesis. In terms of biological role, a cytochrome P450 monooxygenase that catalyzes the conversion of C19 androgens, androst-4-ene-3,17-dione (androstenedione) and testosterone to the C18 estrogens, estrone and estradiol, respectively. Catalyzes three successive oxidations of C19 androgens: two conventional oxidations at C19 yielding 19-hydroxy and 19-oxo/19-aldehyde derivatives, followed by a third oxidative aromatization step that involves C1-beta hydrogen abstraction combined with cleavage of the C10-C19 bond to yield a phenolic A ring and formic acid. Alternatively, the third oxidative reaction yields a 19-norsteroid and formic acid. Converts dihydrotestosterone to delta1,10-dehydro 19-nordihydrotestosterone and may play a role in homeostasis of this potent androgen. Also displays 2-hydroxylase activity toward estrone. Mechanistically, uses molecular oxygen inserting one oxygen atom into a substrate, and reducing the second into a water molecule, with two electrons provided by NADPH via cytochrome P450 reductase (CPR; NADPH-ferrihemoprotein reductase). This Homo sapiens (Human) protein is Aromatase.